We begin with the raw amino-acid sequence, 413 residues long: MGVIELCNTSSICIGRAKPSCCSIERNQRRRIICMASSVPVQEESQQKQRVTGDAFIRPHLLKLSPYQPILPFEVLSTRLGRKPEDIVKLDANENPYGPPPEVIEALGAMKFPYIYPDPESRTLRAALAEDSGLESEYILAGCGADELIDLIMRCVLDPGDMIVDCPPTFTMYEFDAAVNGAHVIKVPRNPDFSLDVERIAEVVEHEKPKCIFLTSPNNPDGSIVDDETLLKILDLPILVILDEAYVEFSGMESKMKWVKKHENLIVLRTFSKRAGLAGLRVGYGAFPKSIIEFLWRAKQPYNVSVAAEVAACAALKNPTYLENVKVALVQERERLFNLLKEVPFLDPYPSYSNFILCKVTSGMDAKKLKEDLATMGVMIRHYNSKELKGYVRVSVGKPEHTEALMKCLKHFY.

The N-terminal 35 residues, 1 to 35, are a transit peptide targeting the chloroplast; that stretch reads MGVIELCNTSSICIGRAKPSCCSIERNQRRRIICM. An N6-(pyridoxal phosphate)lysine modification is found at K273.

It belongs to the class-II pyridoxal-phosphate-dependent aminotransferase family. Histidinol-phosphate aminotransferase subfamily. As to quaternary structure, homodimer. Pyridoxal 5'-phosphate serves as cofactor. As to expression, mainly expressed in green tissues.

The protein resides in the plastid. It localises to the chloroplast. The catalysed reaction is L-histidinol phosphate + 2-oxoglutarate = 3-(imidazol-4-yl)-2-oxopropyl phosphate + L-glutamate. Its pathway is amino-acid biosynthesis; L-histidine biosynthesis; L-histidine from 5-phospho-alpha-D-ribose 1-diphosphate: step 7/9. This is Histidinol-phosphate aminotransferase, chloroplastic (HPA) from Nicotiana tabacum (Common tobacco).